The following is a 66-amino-acid chain: MLKNFKNFTLEDMKAKRLELKKEYLDLRFKSVVGHVENPLKKREIRRDIARLNTMICEYELGIRKV.

Belongs to the universal ribosomal protein uL29 family.

This Borreliella burgdorferi (strain ZS7) (Borrelia burgdorferi) protein is Large ribosomal subunit protein uL29.